The primary structure comprises 467 residues: Ran-binding protein M homolog (467 aa).

Residues 1–25 (MNSSPPPANSANGDTTNNGENGQDL) are disordered. Positions 9-25 (NSANGDTTNNGENGQDL) are enriched in polar residues. The 189-residue stretch at 31–219 (DKIRLSAKRD…VLVNFGKKKF (189 aa)) folds into the B30.2/SPRY domain. The 33-residue stretch at 244–276 (PPNIGYGLVKTYLLHYGYEETLDAFNLATKNTV) folds into the LisH domain. Residues 295–353 (ALKQRKNLRQLVRNGEIDTALAELQKLYPQIVQDDKSVVCFLLHCQKFIELVRVGKLEE) enclose the CTLH domain.

It belongs to the RANBP9/10 family. Interacts with WDR36, WDS, GID8, MAEA and RMD5.

Its subcellular location is the cytoplasm. The protein resides in the nucleus. The protein localises to the perinuclear region. This Arabidopsis thaliana (Mouse-ear cress) protein is Ran-binding protein M homolog.